We begin with the raw amino-acid sequence, 290 residues long: F-box protein PP2-A13 (290 aa).

An F-box domain is found at 21–67 (RKLRLVDLPENCVALIMTRLDPPEICRLARLNRMFRRASSADFIWES).

Part of a SCF (ASK-cullin-F-box) protein ligase complex. Interacts with SKP1A/ASK1, SKP1B/ASK2, ASK5, ASK11 and ASK13.

Its subcellular location is the nucleus. It participates in protein modification; protein ubiquitination. Component of SCF(ASK-cullin-F-box) E3 ubiquitin ligase complexes, which may mediate the ubiquitination and subsequent proteasomal degradation of target proteins. The sequence is that of F-box protein PP2-A13 (PP2A13) from Arabidopsis thaliana (Mouse-ear cress).